A 221-amino-acid polypeptide reads, in one-letter code: Small ribosomal subunit protein uS5 (221 aa).

The S5 DRBM domain maps to L46 to I109.

Belongs to the universal ribosomal protein uS5 family. In terms of assembly, part of the 30S ribosomal subunit. Contacts protein S4.

With S4 and S12 plays an important role in translational accuracy. This is Small ribosomal subunit protein uS5 from Thermoplasma acidophilum (strain ATCC 25905 / DSM 1728 / JCM 9062 / NBRC 15155 / AMRC-C165).